Consider the following 320-residue polypeptide: uncharacterized protein (320 aa).

This is an uncharacterized protein from Orgyia pseudotsugata (Douglas-fir tussock moth).